A 361-amino-acid chain; its full sequence is dTDP-glucose 4,6-dehydratase (361 aa).

NAD(+) contacts are provided by residues 11–12, 32–35, 58–59, 80–84, and Thr-99; these read FI, DKLT, DI, and LAAES. Ser-84 contributes to the substrate binding site. Thr-133 provides a ligand contact to substrate. The active-site Proton donor is Asp-134. Residues Glu-135 and Tyr-167 each act as proton acceptor in the active site. 167–171 serves as a coordination point for NAD(+); that stretch reads YSASK. Residue Asn-196 participates in substrate binding. Residue Asn-197 participates in NAD(+) binding. Substrate-binding positions include 206-207, 222-224, Arg-231, Asn-266, 296-300, and Tyr-357; these read KL, PIY, and DRPGH.

This sequence belongs to the NAD(P)-dependent epimerase/dehydratase family. dTDP-glucose dehydratase subfamily. Homodimer. NAD(+) serves as cofactor.

It carries out the reaction dTDP-alpha-D-glucose = dTDP-4-dehydro-6-deoxy-alpha-D-glucose + H2O. The protein operates within carbohydrate biosynthesis; dTDP-L-rhamnose biosynthesis. It functions in the pathway bacterial outer membrane biogenesis; LPS O-antigen biosynthesis. Its function is as follows. Catalyzes the dehydration of dTDP-D-glucose to form dTDP-6-deoxy-D-xylo-4-hexulose via a three-step process involving oxidation, dehydration and reduction. This Salmonella typhimurium (strain LT2 / SGSC1412 / ATCC 700720) protein is dTDP-glucose 4,6-dehydratase.